The primary structure comprises 185 residues: ATP synthase subunit b, chloroplastic (185 aa).

The helical transmembrane segment at 27–49 (LATNPINLSVVLGVLIFFGKGVL) threads the bilayer.

Belongs to the ATPase B chain family. In terms of assembly, F-type ATPases have 2 components, F(1) - the catalytic core - and F(0) - the membrane proton channel. F(1) has five subunits: alpha(3), beta(3), gamma(1), delta(1), epsilon(1). F(0) has four main subunits: a(1), b(1), b'(1) and c(10-14). The alpha and beta chains form an alternating ring which encloses part of the gamma chain. F(1) is attached to F(0) by a central stalk formed by the gamma and epsilon chains, while a peripheral stalk is formed by the delta, b and b' chains.

It is found in the plastid. Its subcellular location is the chloroplast thylakoid membrane. Functionally, f(1)F(0) ATP synthase produces ATP from ADP in the presence of a proton or sodium gradient. F-type ATPases consist of two structural domains, F(1) containing the extramembraneous catalytic core and F(0) containing the membrane proton channel, linked together by a central stalk and a peripheral stalk. During catalysis, ATP synthesis in the catalytic domain of F(1) is coupled via a rotary mechanism of the central stalk subunits to proton translocation. Its function is as follows. Component of the F(0) channel, it forms part of the peripheral stalk, linking F(1) to F(0). This Vitis vinifera (Grape) protein is ATP synthase subunit b, chloroplastic.